The following is a 227-amino-acid chain: 7-cyano-7-deazaguanine synthase (227 aa).

9–19 (LSGGLDSATVL) serves as a coordination point for ATP. Residues cysteine 189, cysteine 199, cysteine 202, and cysteine 205 each coordinate Zn(2+).

This sequence belongs to the QueC family. It depends on Zn(2+) as a cofactor.

It carries out the reaction 7-carboxy-7-deazaguanine + NH4(+) + ATP = 7-cyano-7-deazaguanine + ADP + phosphate + H2O + H(+). It functions in the pathway purine metabolism; 7-cyano-7-deazaguanine biosynthesis. In terms of biological role, catalyzes the ATP-dependent conversion of 7-carboxy-7-deazaguanine (CDG) to 7-cyano-7-deazaguanine (preQ(0)). This Cupriavidus necator (strain ATCC 17699 / DSM 428 / KCTC 22496 / NCIMB 10442 / H16 / Stanier 337) (Ralstonia eutropha) protein is 7-cyano-7-deazaguanine synthase.